A 140-amino-acid chain; its full sequence is ATP synthase epsilon chain (140 aa).

Belongs to the ATPase epsilon chain family. In terms of assembly, F-type ATPases have 2 components, CF(1) - the catalytic core - and CF(0) - the membrane proton channel. CF(1) has five subunits: alpha(3), beta(3), gamma(1), delta(1), epsilon(1). CF(0) has three main subunits: a, b and c.

It is found in the cell inner membrane. In terms of biological role, produces ATP from ADP in the presence of a proton gradient across the membrane. The polypeptide is ATP synthase epsilon chain (Colwellia psychrerythraea (strain 34H / ATCC BAA-681) (Vibrio psychroerythus)).